We begin with the raw amino-acid sequence, 249 residues long: Isoprenyl transferase 1 (249 aa).

The active site involves D30. D30 is a binding site for Mg(2+). Residues G31–R34, W35, R43, H47, and S75–E77 contribute to the substrate site. N78 acts as the Proton acceptor in catalysis. Residues W79, R81, R198, and R204–S206 each bind substrate. E217 is a binding site for Mg(2+).

Belongs to the UPP synthase family. Homodimer. The cofactor is Mg(2+).

Its function is as follows. Catalyzes the condensation of isopentenyl diphosphate (IPP) with allylic pyrophosphates generating different type of terpenoids. In Tropheryma whipplei (strain Twist) (Whipple's bacillus), this protein is Isoprenyl transferase 1.